A 61-amino-acid chain; its full sequence is Beta-insect depressant toxin BmKIT2 (61 aa).

The 61-residue stretch at 1–61 (DGYIKGKSGC…TWKSESNTCG (61 aa)) folds into the LCN-type CS-alpha/beta domain. 4 disulfides stabilise this stretch: Cys10–Cys60, Cys14–Cys35, Cys21–Cys42, and Cys25–Cys44. Position 61 is a glycine amide (Gly61).

Belongs to the long (4 C-C) scorpion toxin superfamily. Sodium channel inhibitor family. Beta subfamily. As to expression, expressed by the venom gland.

The protein resides in the secreted. Its function is as follows. On insects, this depressant beta-toxins cause a transient contraction paralysis followed by a slow flaccid paralysis. They bind voltage-independently at site-4 of sodium channels (Nav) and shift the voltage of activation toward more negative potentials thereby affecting sodium channel activation and promoting spontaneous and repetitive firing. This toxin is active against insects and mammals. It is capable of binding to not only cockroach neuronal membranes, but also rat cerebrocortical and hippocampal synaptosomes. This toxin also has potent peripheral and central suppressive effects on rat nociceptive spontaneous responses, thermal hyperalgesia and spinal c-Fos expression induced by formalin and carrageenan, which may be derived from its modulation on the activity of sodium channels of the neurons. Administration of BmKIT2 into rat brain can also suppress the epileptic seizures significantly. This is Beta-insect depressant toxin BmKIT2 from Olivierus martensii (Manchurian scorpion).